Reading from the N-terminus, the 206-residue chain is Uridine kinase (206 aa).

11 to 18 (GGTGSGKS) lines the ATP pocket.

Belongs to the uridine kinase family.

Its subcellular location is the cytoplasm. The catalysed reaction is uridine + ATP = UMP + ADP + H(+). The enzyme catalyses cytidine + ATP = CMP + ADP + H(+). The protein operates within pyrimidine metabolism; CTP biosynthesis via salvage pathway; CTP from cytidine: step 1/3. Its pathway is pyrimidine metabolism; UMP biosynthesis via salvage pathway; UMP from uridine: step 1/1. The protein is Uridine kinase of Clostridium botulinum (strain Kyoto / Type A2).